The following is a 262-amino-acid chain: Abhydrolase domain-containing protein ACTT2-2 (262 aa).

The Peroxisomal targeting signal type 1 signature appears at 260 to 262; it reads SKL.

The protein belongs to the AB hydrolase superfamily. AKT2 hydrolase family.

The protein resides in the peroxisome. Its pathway is mycotoxin biosynthesis. Functionally, abhydrolase domain-containing protein; part of the gene clusters that mediate the biosynthesis of the host-selective toxins (HSTs) ACT-toxins responsible for brown spot of tangerine disease by the tangerine pathotype which affects tangerines and mandarins. ACT-toxins consist of three moieties, 9,10-epoxy-8-hydroxy-9-methyl-decatrienoic acid (EDA), valine and a polyketide. ACT-toxin I is toxic to both citrus and pear; toxin II the 5''-deoxy derivative of ACT-toxin I, is highly toxic to pear and slightly toxic to citrus. On cellular level, ACT-toxins affect plasma membrane of susceptible cells and cause a sudden increase in loss of K(+) after a few minutes of toxin treatment. The acyl-CoA ligase ACTT1, the hydrolase ACTT2, the enoyl-CoA hydratases ACTT3 and ACTT6, and the acyl-CoA synthetase ACTT5 are all involved in the biosynthesis of the AK-, AF- and ACT-toxin common 9,10-epoxy-8-hydroxy-9-methyl-decatrienoic acid (EDA) structural moiety. The exact role of each enzyme, and of additional enzymes identified within the AF-toxin clusters have still to be determined. On the other hand, ACTTS1 to ACTTS4 are specific to the tangerine pathotype. The function of ACTTS3 is to elongate the polyketide chain portion of ACT-toxin that is unique to this toxin. The enoyl-reductase ACTTS2 might complement the missing enoyl-reductase (ER) domain in ACTTS3 in the synthesis of the polyketide portion of ACT-toxin. The roles of the nonribosomal peptide synthetases-related proteins ACTTS1 and ACTTS4 have also still not been elucidated. This chain is Abhydrolase domain-containing protein ACTT2-2 (ACTT2-2), found in Alternaria alternata (Alternaria rot fungus).